Consider the following 290-residue polypeptide: Shikimate dehydrogenase (NADP(+)) (290 aa).

Shikimate is bound by residues 22-24 and Thr68; that span reads SLS. The active-site Proton acceptor is Lys72. Residue Asp84 participates in NADP(+) binding. 2 residues coordinate shikimate: Asn93 and Asp108. Residues 133 to 137 and Ile228 contribute to the NADP(+) site; that span reads GSGGS. Position 230 (Tyr230) interacts with shikimate. NADP(+) is bound at residue Gly251.

It belongs to the shikimate dehydrogenase family. Homodimer.

It catalyses the reaction shikimate + NADP(+) = 3-dehydroshikimate + NADPH + H(+). It functions in the pathway metabolic intermediate biosynthesis; chorismate biosynthesis; chorismate from D-erythrose 4-phosphate and phosphoenolpyruvate: step 4/7. Its function is as follows. Involved in the biosynthesis of the chorismate, which leads to the biosynthesis of aromatic amino acids. Catalyzes the reversible NADPH linked reduction of 3-dehydroshikimate (DHSA) to yield shikimate (SA). This Leptospira interrogans serogroup Icterohaemorrhagiae serovar Lai (strain 56601) protein is Shikimate dehydrogenase (NADP(+)).